The chain runs to 275 residues: Urease accessory protein UreD (275 aa).

The protein belongs to the UreD family. UreD, UreF and UreG form a complex that acts as a GTP-hydrolysis-dependent molecular chaperone, activating the urease apoprotein by helping to assemble the nickel containing metallocenter of UreC. The UreE protein probably delivers the nickel.

It localises to the cytoplasm. In terms of biological role, required for maturation of urease via the functional incorporation of the urease nickel metallocenter. The chain is Urease accessory protein UreD from Cereibacter sphaeroides (strain ATCC 17023 / DSM 158 / JCM 6121 / CCUG 31486 / LMG 2827 / NBRC 12203 / NCIMB 8253 / ATH 2.4.1.) (Rhodobacter sphaeroides).